A 383-amino-acid polypeptide reads, in one-letter code: Protein delta homolog 1 (383 aa).

The first 23 residues, 1 to 23 (MIATGALLRVLLLLLAFGHSTYG), serve as a signal peptide directing secretion. 6 EGF-like domains span residues 24-55 (AECDPACDPQHGFCEADNVCRCEPGWEGPLCE), 59-86 (TSPGCVNGLCEEPWQCVCKEGWDGKFCE), 88-125 (DIRACTSTPCANNGTCVDLEKGQYECSCTPGFSGKDCQ), 127-168 (KAGP…NFCE), 170-206 (VTNSCTPNPCENDGVCTDIGGDFRCRCPAGFVDKTCS), and 208-245 (PVSNCASGPCLNGGTCLQHTQVSFECLCKPPFMGPTCA). Over 24–306 (AECDPACDPQ…PLLTEGQAIC (283 aa)) the chain is Extracellular. 17 disulfide bridges follow: Cys26/Cys37, Cys30/Cys43, Cys45/Cys54, Cys63/Cys68, Cys76/Cys85, Cys92/Cys103, Cys97/Cys113, Cys115/Cys124, Cys131/Cys144, Cys138/Cys156, Cys158/Cys167, Cys174/Cys185, Cys179/Cys194, Cys196/Cys205, Cys212/Cys223, Cys217/Cys233, and Cys235/Cys244. The chain crosses the membrane as a helical span at residues 307–327 (FTILGVLTSLVVLGTVAIVFL). Topologically, residues 328–383 (NKCEAWVSNLRYNHMLRKKKNLLLQYNSGEELAVNIIFPEKIDMTTFNKEAGDEDI) are cytoplasmic.

In terms of assembly, monomer. Interacts with SH3RF2. Glycosylated. As to expression, pancreas and adrenal glands (at protein level).

It localises to the membrane. The protein localises to the cytoplasm. May have a role in neuroendocrine differentiation. Inhibits adipocyte differentiation. This is Protein delta homolog 1 (Dlk1) from Rattus norvegicus (Rat).